Consider the following 411-residue polypeptide: MQTSEREGSGPELSPSVMPEAPLESPPFPTKSPAFDLFNLVLSYKRLEIYLEPLKDAGDGVRYLLRWQMPLCSLLTCLGLNVLFLTLNEGAWYSVGALMISVPALLGYLQEVCRARLPESELMRRKYHSVRQEDLQRVRLSRPEAVAEVKSFLIQLEAFLSRLCCTCEAAYRVLHWENPVVSSQFYGALLGTICMLYLLPLCWVLTLLNSTLFLGNVEFFRVVSEYRASLQQRMNPKQEEHAFESPPPPDVGGKGGLMDSTPALTPTEDLTPGSVEEAEEAEPDEEFKDAIEETHLVVLEDDEGAPCPAEDELALQDNGFLSKNEVLRSKVSRLTERLRKRYPTNNFGNCTGCSATFSVLKKRRSCSNCGNSFCSRCCSFKVPKSSMGATAPEAQRETVFVCASCNQTLSK.

Positions 1 to 27 (MQTSEREGSGPELSPSVMPEAPLESPP) are disordered. Residues 1-66 (MQTSEREGSG…AGDGVRYLLR (66 aa)) lie on the Cytoplasmic side of the membrane. The interval 1–92 (MQTSEREGSG…LFLTLNEGAW (92 aa)) is sufficient for homooligomerization. The interval 1–205 (MQTSEREGSG…LYLLPLCWVL (205 aa)) is sufficient for localization to endoplasmic reticulum tubular network and for interactions with REEP1, REEP5, ATL1, ATL2, ATL3 and SPAST. Residues 51-64 (LEPLKDAGDGVRYL) are necessary for interaction with RAB11A and function in neurite outgrowth. A helical membrane pass occupies residues 67-87 (WQMPLCSLLTCLGLNVLFLTL). Position 88 (N88) is a topological domain, lumenal. A helical transmembrane segment spans residues 89–109 (EGAWYSVGALMISVPALLGYL). Residues 110–187 (QEVCRARLPE…NPVVSSQFYG (78 aa)) lie on the Cytoplasmic side of the membrane. Residues 188–208 (ALLGTICMLYLLPLCWVLTLL) constitute an intramembrane region (helical). Residues 209 to 411 (NSTLFLGNVE…CASCNQTLSK (203 aa)) lie on the Cytoplasmic side of the membrane. Residues 234-286 (MNPKQEEHAFESPPPPDVGGKGGLMDSTPALTPTEDLTPGSVEEAEEAEPDEE) are disordered. The interval 271-361 (TPGSVEEAEE…GCSATFSVLK (91 aa)) is necessary for interaction with KIF5A. Residues 276 to 286 (EEAEEAEPDEE) show a composition bias toward acidic residues. The tract at residues 286 to 292 (EFKDAIE) is necessary for interaction with VAPA. An FYVE-type zinc finger spans residues 344 to 410 (TNNFGNCTGC…VCASCNQTLS (67 aa)). 8 residues coordinate Zn(2+): C350, C353, C366, C369, C374, C377, C402, and C405.

Can form homooligomers (monomers, dimers and tetramers). Interacts with RAB11A (GDP-bound form); regulates RAB11A. Interacts with FKBP8; may negatively regulate ZFYVE27 phosphorylation. Interacts with VAPA (via MSP domain); may regulate ZFYVE27 retention in the endoplasmic reticulum and its function in cell projections formation. Interacts with VAPB (via MSP domain). Interacts with RAB11B (GDP-bound form), REEP1, REEP5, ATL1, ATL2, ATL3, SPAST, SURF4, KIF5A, KIF5B, KIF5C and RTN3. Post-translationally, phosphorylated. Phosphorylation is induced by NGF through the MAPK/ERK pathway and modulates interaction with RAB11A.

It localises to the recycling endosome membrane. It is found in the endoplasmic reticulum membrane. The protein localises to the cell projection. The protein resides in the growth cone membrane. Key regulator of RAB11-dependent vesicular trafficking during neurite extension through polarized membrane transport. Promotes axonal elongation and contributes to the establishment of neuronal cell polarity. Involved in nerve growth factor-induced neurite formation in VAPA-dependent manner. Contributes to both the formation and stabilization of the tubular ER network. Involved in ER morphogenesis by regulating the sheet-to-tubule balance and possibly the density of tubule interconnections. Acts as an adapter protein that facilitates the interaction of KIF5A with VAPA, VAPB, SURF4, RAB11A, RAB11B and RTN3 and the ZFYVE27-KIF5A complex contributes to the transport of these proteins in neurons. Can induce formation of neurite-like membrane protrusions in non-neuronal cells in a KIF5A/B-dependent manner. The polypeptide is Protrudin (ZFYVE27) (Pongo abelii (Sumatran orangutan)).